The chain runs to 105 residues: Keratin-associated protein 17-1 (105 aa).

As to quaternary structure, interacts with hair keratins.

Its function is as follows. In the hair cortex, hair keratin intermediate filaments are embedded in an interfilamentous matrix, consisting of hair keratin-associated proteins (KRTAP), which are essential for the formation of a rigid and resistant hair shaft through their extensive disulfide bond cross-linking with abundant cysteine residues of hair keratins. The matrix proteins include the high-sulfur and high-glycine-tyrosine keratins. The protein is Keratin-associated protein 17-1 (KRTAP17-1) of Homo sapiens (Human).